The sequence spans 180 residues: Dynactin subunit 6 (180 aa).

This sequence belongs to the dynactin subunits 5/6 family. Dynactin subunit 6 subfamily. Subunit of dynactin, a multiprotein complex part of a tripartite complex with dynein and a adapter, such as BICDL1, BICD2 or HOOK3. The dynactin complex is built around ACTR1A/ACTB filament and consists of an actin-related filament composed of a shoulder domain, a pointed end and a barbed end.

It localises to the cytoplasm. The protein localises to the cytoskeleton. Part of the dynactin complex that activates the molecular motor dynein for ultra-processive transport along microtubules. The chain is Dynactin subunit 6 (dnc-6) from Caenorhabditis elegans.